A 230-amino-acid polypeptide reads, in one-letter code: UPF0173 metal-dependent hydrolase Mbar_A3716 (230 aa).

This sequence belongs to the UPF0173 family.

The chain is UPF0173 metal-dependent hydrolase Mbar_A3716 from Methanosarcina barkeri (strain Fusaro / DSM 804).